Here is a 275-residue protein sequence, read N- to C-terminus: Adenylate kinase (275 aa).

Residue 54–59 coordinates ATP; that stretch reads GAGKGT. The segment at 74 to 103 is NMP; that stretch reads ATGDMLRSQVAKKTPLGREAKKIMDQGGLV. AMP-binding positions include Thr-75, Arg-80, 101–103, 130–133, and Gln-137; these read GLV and GFPR. Positions 171–208 are LID; it reads GRLVHPASGRSYHRVFNPPKADMKDDITGEPLVSRSDD. ATP-binding positions include Arg-172 and 181-182; that span reads SY. The AMP site is built by Arg-205 and Arg-216. ATP is bound at residue Gln-244.

The protein belongs to the adenylate kinase family. AK2 subfamily. In terms of assembly, monomer.

The protein localises to the cytoplasm. The protein resides in the cytosol. It localises to the mitochondrion intermembrane space. The enzyme catalyses AMP + ATP = 2 ADP. In terms of biological role, catalyzes the reversible transfer of the terminal phosphate group between ATP and AMP. Plays an important role in cellular energy homeostasis and in adenine nucleotide metabolism. Adenylate kinase activity is critical for regulation of the phosphate utilization and the AMP de novo biosynthesis pathways. The sequence is that of Adenylate kinase (adk1) from Botryotinia fuckeliana (strain B05.10) (Noble rot fungus).